Reading from the N-terminus, the 59-residue chain is Large ribosomal subunit protein uL30 (59 aa).

Belongs to the universal ribosomal protein uL30 family. In terms of assembly, part of the 50S ribosomal subunit.

This Geobacter metallireducens (strain ATCC 53774 / DSM 7210 / GS-15) protein is Large ribosomal subunit protein uL30.